Consider the following 181-residue polypeptide: MQKEIRRDDIIGSRRFSNYFWAVFLCSGGISFLLAGISSYFKINFLPFANPKELAFIPQGLVMSFYGTLSIALAIYILGTLFWDIGSGYNEYNKVENLVKIVRKGFPGKNREILLTYPLTNIRAIGIKISEGLNPKRSIYLCLKDERQIPLTPVQQPNSISNLEEEAAELAKFLDLKLENL.

The next 2 helical transmembrane spans lie at 19-41 (YFWA…SSYF) and 61-83 (LVMS…TLFW).

Belongs to the Ycf4 family.

It localises to the plastid. Its subcellular location is the chloroplast thylakoid membrane. Its function is as follows. Seems to be required for the assembly of the photosystem I complex. The chain is Photosystem I assembly protein Ycf4 from Trieres chinensis (Marine centric diatom).